Here is a 416-residue protein sequence, read N- to C-terminus: Serine carboxypeptidase S10 family member 1 (416 aa).

Positions 1-20 (MMKLLFIIISIIFVINVSNS) are cleaved as a signal peptide. N-linked (GlcNAc...) asparagine glycosylation is found at asparagine 33 and asparagine 84. Serine 156 is an active-site residue. N-linked (GlcNAc...) asparagine glycans are attached at residues asparagine 235, asparagine 273, and asparagine 295. Residue aspartate 338 is part of the active site. Asparagine 385 carries N-linked (GlcNAc...) asparagine glycosylation. Histidine 396 is an active-site residue.

Belongs to the peptidase S10 family.

The protein resides in the secreted. Probable carboxypeptidase. This Dictyostelium discoideum (Social amoeba) protein is Serine carboxypeptidase S10 family member 1.